Reading from the N-terminus, the 451-residue chain is Phosphoglucosamine mutase (451 aa).

Ser-101 acts as the Phosphoserine intermediate in catalysis. Mg(2+) contacts are provided by Ser-101, Asp-241, Asp-243, and Asp-245. Residue Ser-101 is modified to Phosphoserine.

It belongs to the phosphohexose mutase family. Mg(2+) serves as cofactor. Post-translationally, activated by phosphorylation.

The catalysed reaction is alpha-D-glucosamine 1-phosphate = D-glucosamine 6-phosphate. Catalyzes the conversion of glucosamine-6-phosphate to glucosamine-1-phosphate. The sequence is that of Phosphoglucosamine mutase from Exiguobacterium sibiricum (strain DSM 17290 / CCUG 55495 / CIP 109462 / JCM 13490 / 255-15).